A 141-amino-acid polypeptide reads, in one-letter code: MLDTQQIKEIIPHRYPFLLVDRITEVEEGKRAKGYKNVTANEEFFNGHFPQYPVMPGVLIVEALAQVGAVAMLIKEENRGRLAFFAGIDNCRFKKQVKPGDQLHLEVEIIRARGTIGRGKGVATVDGEVVCEVELTFALGE.

The active site involves His-48.

This sequence belongs to the thioester dehydratase family. FabZ subfamily.

The protein localises to the cytoplasm. It catalyses the reaction a (3R)-hydroxyacyl-[ACP] = a (2E)-enoyl-[ACP] + H2O. Functionally, involved in unsaturated fatty acids biosynthesis. Catalyzes the dehydration of short chain beta-hydroxyacyl-ACPs and long chain saturated and unsaturated beta-hydroxyacyl-ACPs. This Bacillus subtilis (strain 168) protein is 3-hydroxyacyl-[acyl-carrier-protein] dehydratase FabZ.